The following is a 346-amino-acid chain: Probable dual-specificity RNA methyltransferase RlmN (346 aa).

The Proton acceptor role is filled by glutamate 76. A Radical SAM core domain is found at 97–329 (SYDRATICVS…TFIRKPRGRD (233 aa)). The cysteines at positions 104 and 334 are disulfide-linked. Residues cysteine 111, cysteine 115, and cysteine 118 each contribute to the [4Fe-4S] cluster site. S-adenosyl-L-methionine contacts are provided by residues 162 to 163 (GE), serine 192, 215 to 217 (SLN), and asparagine 291. Cysteine 334 (S-methylcysteine intermediate) is an active-site residue.

This sequence belongs to the radical SAM superfamily. RlmN family. [4Fe-4S] cluster is required as a cofactor.

It localises to the cytoplasm. It catalyses the reaction adenosine(2503) in 23S rRNA + 2 reduced [2Fe-2S]-[ferredoxin] + 2 S-adenosyl-L-methionine = 2-methyladenosine(2503) in 23S rRNA + 5'-deoxyadenosine + L-methionine + 2 oxidized [2Fe-2S]-[ferredoxin] + S-adenosyl-L-homocysteine. The catalysed reaction is adenosine(37) in tRNA + 2 reduced [2Fe-2S]-[ferredoxin] + 2 S-adenosyl-L-methionine = 2-methyladenosine(37) in tRNA + 5'-deoxyadenosine + L-methionine + 2 oxidized [2Fe-2S]-[ferredoxin] + S-adenosyl-L-homocysteine. Specifically methylates position 2 of adenine 2503 in 23S rRNA and position 2 of adenine 37 in tRNAs. The sequence is that of Probable dual-specificity RNA methyltransferase RlmN from Koribacter versatilis (strain Ellin345).